A 221-amino-acid chain; its full sequence is Endonuclease V (221 aa).

Residues Asp43 and Asp109 each contribute to the Mg(2+) site.

The protein belongs to the endonuclease V family. Requires Mg(2+) as cofactor.

The protein resides in the cytoplasm. The enzyme catalyses Endonucleolytic cleavage at apurinic or apyrimidinic sites to products with a 5'-phosphate.. Its function is as follows. DNA repair enzyme involved in the repair of deaminated bases. Selectively cleaves double-stranded DNA at the second phosphodiester bond 3' to a deoxyinosine leaving behind the intact lesion on the nicked DNA. The sequence is that of Endonuclease V from Petrotoga mobilis (strain DSM 10674 / SJ95).